A 311-amino-acid chain; its full sequence is Homeobox-leucine zipper protein ATHB-6 (311 aa).

The span at 1-10 shows a compositional bias: polar residues; the sequence is MMKRLSSSDS. Residues 1–32 are disordered; sequence MMKRLSSSDSVGGLISLCPTTSTDEQSPRRYG. The segment at 1–43 is interaction with ABI1; that stretch reads MMKRLSSSDSVGGLISLCPTTSTDEQSPRRYGGREFQSMLEGY. A DNA-binding region (homeobox) is located at residues 59–118; it reads LSEKKRRLSINQVKALEKNFELENKLEPERKVKLAQELGLQPRQVAVWFQNRRARWKTKQ. Residues 119–154 are leucine-zipper; it reads LEKDYGVLKTQYDSLRHNFDSLRRDNESLLQEISKL. The disordered stretch occupies residues 157 to 183; the sequence is KLNGGGGEEEEEENNAAVTTESDISVK. An interaction with ABI1 region spans residues 218 to 311; that stretch reads LRDLLPLKAA…HWYSTVDHWN (94 aa).

This sequence belongs to the HD-ZIP homeobox family. Class I subfamily. Interacts with ABI1. In terms of processing, phosphorylated by PKA. Reversible inactivation of the binding to DNA by phosphorylation. In terms of tissue distribution, widely expressed.

It localises to the nucleus. Its function is as follows. Transcription activator that may act as growth regulators in response to water deficit. Interacts with the core sequence 5'-CAATTATTA-3' of promoters in response to ABA and in an ABI1-dependent manner. Involved in the negative regulation of the ABA signaling pathway. The polypeptide is Homeobox-leucine zipper protein ATHB-6 (ATHB-6) (Arabidopsis thaliana (Mouse-ear cress)).